We begin with the raw amino-acid sequence, 276 residues long: Undecaprenyl-diphosphatase (276 aa).

Helical transmembrane passes span Tyr-84–Phe-104, Leu-115–Leu-135, Phe-188–Ala-208, Gln-222–Leu-242, and Met-250–Thr-270.

This sequence belongs to the UppP family.

It localises to the cell membrane. The enzyme catalyses di-trans,octa-cis-undecaprenyl diphosphate + H2O = di-trans,octa-cis-undecaprenyl phosphate + phosphate + H(+). Catalyzes the dephosphorylation of undecaprenyl diphosphate (UPP). Confers resistance to bacitracin. This is Undecaprenyl-diphosphatase from Mycobacterium ulcerans (strain Agy99).